The following is a 210-amino-acid chain: Large ribosomal subunit protein uL3 (210 aa).

Positions 139-165 are disordered; sequence AEKVHRSPGSIGHATFPGKVFKGKKMP.

Belongs to the universal ribosomal protein uL3 family. As to quaternary structure, part of the 50S ribosomal subunit. Forms a cluster with proteins L14 and L19.

In terms of biological role, one of the primary rRNA binding proteins, it binds directly near the 3'-end of the 23S rRNA, where it nucleates assembly of the 50S subunit. The polypeptide is Large ribosomal subunit protein uL3 (Maridesulfovibrio salexigens (strain ATCC 14822 / DSM 2638 / NCIMB 8403 / VKM B-1763) (Desulfovibrio salexigens)).